The primary structure comprises 144 residues: Large ribosomal subunit protein uL13 (144 aa).

Belongs to the universal ribosomal protein uL13 family. In terms of assembly, part of the 50S ribosomal subunit.

Its function is as follows. This protein is one of the early assembly proteins of the 50S ribosomal subunit, although it is not seen to bind rRNA by itself. It is important during the early stages of 50S assembly. The polypeptide is Large ribosomal subunit protein uL13 (Clostridium novyi (strain NT)).